Here is a 319-residue protein sequence, read N- to C-terminus: Lipase 1 (319 aa).

The active-site Nucleophile is Ser-189. The Ca(2+) site is built by Asp-314 and Asp-317.

It carries out the reaction a triacylglycerol + H2O = a diacylglycerol + a fatty acid + H(+). The chain is Lipase 1 (lip1) from Moraxella sp. (strain TA144).